We begin with the raw amino-acid sequence, 384 residues long: AAFAYFSGFMLDDARFSPAEIELMESVLLDNNLTMVQFVDRLRWDCHELLHRCRYHGDIMDCTQLFQLSKTFFGHCCSFNLRQHGLDFTAQAAAGGLDNGLSLILRYKDENYDALQSYSHGFKLLIQETDAFPSAHADCKFLGLNTESFATLRVVETFCSEAVKSLPISQRNCVFRHEFRLRYFSDYVYPNCELNCRAKNMVKLCGCHTYFFEFNRTKDRVCTFRDIPCLVDNFPDIITRRKKTQCNCPLTCEHFDYDVQMSNFALMLNMPVVDPFYTGIERNDAIVHIFLNSQVYRRVRVDLLSNMVTLVSHLGSAFSLFVGMSMLSLVEIIYYFTVILRRNYVQECRARQKLQTLHRRPNFGWPGDKNSNQQKSVFYIRGRN.

At 1–319 (AAFAYFSGFM…LVSHLGSAFS (319 aa)) the chain is on the extracellular side. Residues asparagine 32 and asparagine 215 are each glycosylated (N-linked (GlcNAc...) asparagine). A helical transmembrane segment spans residues 320 to 340 (LFVGMSMLSLVEIIYYFTVIL). The Cytoplasmic portion of the chain corresponds to 341 to 384 (RRNYVQECRARQKLQTLHRRPNFGWPGDKNSNQQKSVFYIRGRN).

Belongs to the amiloride-sensitive sodium channel (TC 1.A.6) family.

It localises to the membrane. Its function is as follows. Part of a complex that plays a role in tracheal liquid clearance. Probable role in sodium transport. The protein is Sodium channel protein Nach (Nach) of Drosophila virilis (Fruit fly).